Here is a 244-residue protein sequence, read N- to C-terminus: Serine-rich single-pass membrane protein 1 (244 aa).

Residues 35-55 (CGTIGNFLLWYFVIVFVLMFF) form a helical membrane-spanning segment. Disordered regions lie at residues 65–112 (DKKD…LTPV), 132–191 (QSQF…LGSY), and 213–244 (HSQQKASVTPPMKGDSPEESSISDINTKFSKF). The segment covering 80 to 94 (ASKETSYKWQSKDGA) has biased composition (basic and acidic residues). Composition is skewed to polar residues over residues 97-112 (PSQTMKKPKQNQLTPV) and 132-142 (QSQFNEVNQNQ). The span at 161-176 (SWKESESEHHPSPDSI) shows a compositional bias: basic and acidic residues. Residues 231–244 (ESSISDINTKFSKF) are compositionally biased toward polar residues.

It localises to the membrane. This is Serine-rich single-pass membrane protein 1 (SSMEM1) from Macaca fascicularis (Crab-eating macaque).